The chain runs to 228 residues: Urease accessory protein UreF (228 aa).

This sequence belongs to the UreF family. In terms of assembly, ureD, UreF and UreG form a complex that acts as a GTP-hydrolysis-dependent molecular chaperone, activating the urease apoprotein by helping to assemble the nickel containing metallocenter of UreC. The UreE protein probably delivers the nickel.

It localises to the cytoplasm. Required for maturation of urease via the functional incorporation of the urease nickel metallocenter. The protein is Urease accessory protein UreF of Prochlorococcus marinus (strain MIT 9215).